The primary structure comprises 72 residues: Aurein-2.2 (72 aa).

A signal peptide spans 1-22 (MAFLKKSLFLVLFLGLVSLSIC). The propeptide occupies 23-49 (EKEKRQNEEDEDENEAANHEEGSEEKR). The segment at 27–47 (RQNEEDEDENEAANHEEGSEE) is disordered. Residues 38 to 47 (AANHEEGSEE) show a composition bias toward basic and acidic residues. Leucine 65 is modified (leucine amide). Residues 69-72 (NDLE) constitute a propeptide that is removed on maturation.

In terms of processing, amidation is essential for antibacterial activity against Gram-positive bacteria. Expressed by the skin dorsal glands.

It localises to the secreted. The protein resides in the target cell membrane. In terms of biological role, amphipathic alpha-helical antimicrobial peptide with weak to moderate activity against Gram-positive bacteria, and no activity against Gram-negative bacteria. Probably acts by disturbing membrane functions with its amphipathic structure. Strongly inhibits the formation of NO by neuronal nitric oxide synthase (nNOS) at micromolar concentrations. Acts by a non-competitive mechanism, probably by binding to calcium/calmodulin and as a consequence blocking calmodulin attachment to nNOS. The chain is Aurein-2.2 from Ranoidea aurea (Green and golden bell frog).